We begin with the raw amino-acid sequence, 67 residues long: MAVPKRKMSRSNTRSRRSQWKAAEETLVTSTVRGQVAYSRPHTARVVTDSAGTPLYLEYKGRKVKDL.

The span at 1–19 (MAVPKRKMSRSNTRSRRSQ) shows a compositional bias: basic residues. Residues 1 to 22 (MAVPKRKMSRSNTRSRRSQWKA) are disordered.

This sequence belongs to the bacterial ribosomal protein bL32 family.

This is Large ribosomal subunit protein bL32 from Kineococcus radiotolerans (strain ATCC BAA-149 / DSM 14245 / SRS30216).